A 700-amino-acid chain; its full sequence is Neoverrucotoxin subunit beta (700 aa).

The B30.2/SPRY domain occupies 506–700 (HMPGVETIKD…QKVNGQIKLL (195 aa)).

Belongs to the SNTX/VTX toxin family. In terms of assembly, heterodimer of alpha and beta subunits. In terms of processing, not glycosylated. Post-translationally, four intrachain disulfide linkages are present in the heterodimer. No interchain disulfide bound links the two subunits. As to expression, expressed by the venom gland.

Its subcellular location is the secreted. Functionally, has hemolytic and lethal activities. Its hemolytic activity is inhibited by anionic lipids, especially potently by cardiolipin. In Synanceia verrucosa (Reef stonefish), this protein is Neoverrucotoxin subunit beta.